Here is a 486-residue protein sequence, read N- to C-terminus: Kynurenine 3-monooxygenase (486 aa).

Transmembrane regions (helical) follow at residues 401 to 424 (LLFW…HMRY) and 437 to 459 (ILTR…LCYR).

Belongs to the aromatic-ring hydroxylase family. KMO subfamily. FAD serves as cofactor.

The protein resides in the mitochondrion. Its subcellular location is the membrane. The catalysed reaction is L-kynurenine + NADPH + O2 + H(+) = 3-hydroxy-L-kynurenine + NADP(+) + H2O. The protein operates within cofactor biosynthesis; NAD(+) biosynthesis; quinolinate from L-kynurenine: step 1/3. Functionally, catalyzes the hydroxylation of L-kynurenine (L-Kyn) to form 3-hydroxy-L-kynurenine (L-3OHKyn). Required for synthesis of quinolinic acid. The protein is Kynurenine 3-monooxygenase (kh) of Anopheles gambiae (African malaria mosquito).